The following is a 610-amino-acid chain: MNSQELKKRQENIRNFSIIAHIDHGKSTLADRILEKTETVSSREMQAQLLDSMDLERERGITIKLNAIELNYKAKNGQDYIFHLIDTPGHVDFTYEVSRSLAACEGAVLVVDAAQGIEAQTLANVYLALDNDLEILPVINKIDLPAADPERVRQEIEDVIGLDASEAVLASAKSGIGIEAILEQIVEKVPAPSGDVDKPLQALIFDSVYDAYRGVILQVRVVNGMVKPGDTIQMMSNGKTFDVTEVGIFTPKAIGRDFLATGDVGYIAASIKTVADTRVGDTVTLATNPAAEPLHGYKQMNPMVFAGIYPIESNKYNDLREALEKLQLNDASLQFEPETSQALGFGFRCGFLGLLHMDVIQERLEREFNIDLIMTAPSVVYHVNTTDGDMLEVSNPSEFPDPTKVDSIEEPYVKAQIMVPQEFVGAVMELAQRKRGDFVTMDYIDDNRVNVIYHIPLAEIVFDFFDKLKSSTRGYASFDYEIAEYRRSQLVKMDILLNGDKVDALSFIVHREFAYERGKLIVEKLKKIIPRQQFEVPIQAAIGQKIVARSDIKALRKNVLAKCYGGDVSRKRKLLEKQKAGKKRMKAIGSVEVPQEAFLSVLSMDDESKK.

In terms of domain architecture, tr-type G spans 11 to 193 (ENIRNFSIIA…QIVEKVPAPS (183 aa)). GTP contacts are provided by residues 23–28 (DHGKST) and 140–143 (NKID).

Belongs to the TRAFAC class translation factor GTPase superfamily. Classic translation factor GTPase family. LepA subfamily.

It is found in the cell membrane. The catalysed reaction is GTP + H2O = GDP + phosphate + H(+). In terms of biological role, required for accurate and efficient protein synthesis under certain stress conditions. May act as a fidelity factor of the translation reaction, by catalyzing a one-codon backward translocation of tRNAs on improperly translocated ribosomes. Back-translocation proceeds from a post-translocation (POST) complex to a pre-translocation (PRE) complex, thus giving elongation factor G a second chance to translocate the tRNAs correctly. Binds to ribosomes in a GTP-dependent manner. This Streptococcus equi subsp. zooepidemicus (strain MGCS10565) protein is Elongation factor 4.